The sequence spans 173 residues: MKTKKFSNKNKINEMITAKKVKLVDQNSVMIGVVDIEEALSRAKAVNLDLVEIVHDDQYPLCKIFDYSKYRYSHKKKISDSKKKQKTIIVKELKFKLNIGDNDYNVKLNMLRGFIERGDKVKISLRFIGREILHPEVGMEIIERLIRDTADIAKPENLPKKEGNIINMVLTAK.

It belongs to the IF-3 family. Monomer.

The protein localises to the cytoplasm. Functionally, IF-3 binds to the 30S ribosomal subunit and shifts the equilibrium between 70S ribosomes and their 50S and 30S subunits in favor of the free subunits, thus enhancing the availability of 30S subunits on which protein synthesis initiation begins. The sequence is that of Translation initiation factor IF-3 from Ehrlichia chaffeensis (strain ATCC CRL-10679 / Arkansas).